Here is a 336-residue protein sequence, read N- to C-terminus: Serpentine receptor class gamma-13 (336 aa).

The next 8 helical transmembrane spans lie at 32–52 (LKYI…FLII), 68–88 (FFII…SEIL), 93–113 (FIYV…PSIF), 133–153 (VFLS…SAIW), 156–176 (ILTP…WNVL), 210–230 (FIVS…ALLI), 246–266 (TMVL…FAFF), and 277–297 (LLRV…IIFI).

It belongs to the nematode receptor-like protein srg family.

It localises to the membrane. The chain is Serpentine receptor class gamma-13 (srg-13) from Caenorhabditis elegans.